A 493-amino-acid polypeptide reads, in one-letter code: Succinate-semialdehyde dehydrogenase [NADP(+)] 2 (493 aa).

NAD(+) is bound at residue 242–247 (GSTNVG). Residue Glu264 is part of the active site. Cys298 serves as the catalytic Nucleophile.

This sequence belongs to the aldehyde dehydrogenase family. As to quaternary structure, homotetramer.

It localises to the cytoplasm. It catalyses the reaction succinate semialdehyde + NAD(+) + H2O = succinate + NADH + 2 H(+). The enzyme catalyses succinate semialdehyde + NADP(+) + H2O = succinate + NADPH + 2 H(+). It functions in the pathway amino-acid degradation; 4-aminobutanoate degradation. Its function is as follows. Catalyzes the oxidation of succinate semialdehyde to succinate. Can utilize both NAD(+) or NADP(+) as a coenzyme. Functions in the GABA shunt, which allows to bypass 2 reactions in the TCA cycle by removing alpha-ketoglutarate from the cycle and feeding succinate and NADH back into the cycle. This chain is Succinate-semialdehyde dehydrogenase [NADP(+)] 2 (ssd2), found in Schizosaccharomyces pombe (strain 972 / ATCC 24843) (Fission yeast).